The primary structure comprises 894 residues: MPANTSAAIARSCEFSQYLHRLLTARPEERQRLEQSLHHPFSLEDMQAFADWPALDAPEALAPALRRLRQAVVARLICRDLESLATLDEVVSTISQLAEFAVRQALACAAASLPQYGRPIGEDSGEPQQLIVIGMGKLGGGELNVSSDIDLIFIYPEGGETDGARKISNHEYFTQVGKRLIALLNDATADGQVFRVDMRLRPYGDSGPLVMSFAALENYLLSQGREWERYAWIKAKAITGDADGLAQLVRPFVYRKYLDYNAYGAMRGLHAQIRREVARRDMADNIKLGPGGIREAEFIAQVFQLIRGGRDRTLQLRGTRATLERLAALRLLEPAAVAELQASYAFLRNLEHRLQYLDDQQTQTLPEAPETRQKIAASMGHADWPAFLDALNEVRRKVSRHFEQVFILPSEDSASHPLSELWLDVAEQSPETRLAELGYADPAAVARQLTGLAQSQRYLQMPLAGRKQLDALMPALIEVAARFPNADDTLSRIIGLMEAISRRASYLALLTEYPQTLQRLASLYSSSAWVSAYLSRHPILLDELLDARMLYAAPDWPLLAAQLETQLAQADGDVEAKMDALRHFQHAQTFRLVAQDLAGMWTLEALSDELSRLADLVLAAAVRHAWRDIPSRHCETPRFAVIGYGKLGGKELGYASDLDIIFLYDDEHPDAPDLYSRLARKLSTWLTSATAAGVLYDIDLRLRPNGSSGLLVSSISAFRQYQENQAWVWEHQALTRARFVAGDAGIGSQFEAERHAILTLERDPAKLRDEVMAMRQRMLDSHPAHDGDVKNARGGIIDIEFIVQYLILAHAKTLPALTGNTGNIALLAVAAEAGLIDRRLAEDARAAYRLYRRLQHSARLNDRKTVEVDESLRTAYARGRELWRQVFEQALDFS.

Positions 1 to 410 (MPANTSAAIA…HFEQVFILPS (410 aa)) are adenylyl removase. Positions 415–894 (SHPLSELWLD…QVFEQALDFS (480 aa)) are adenylyl transferase.

This sequence belongs to the GlnE family. Mg(2+) is required as a cofactor.

The catalysed reaction is [glutamine synthetase]-O(4)-(5'-adenylyl)-L-tyrosine + phosphate = [glutamine synthetase]-L-tyrosine + ADP. It carries out the reaction [glutamine synthetase]-L-tyrosine + ATP = [glutamine synthetase]-O(4)-(5'-adenylyl)-L-tyrosine + diphosphate. In terms of biological role, involved in the regulation of glutamine synthetase GlnA, a key enzyme in the process to assimilate ammonia. When cellular nitrogen levels are high, the C-terminal adenylyl transferase (AT) inactivates GlnA by covalent transfer of an adenylyl group from ATP to specific tyrosine residue of GlnA, thus reducing its activity. Conversely, when nitrogen levels are low, the N-terminal adenylyl removase (AR) activates GlnA by removing the adenylyl group by phosphorolysis, increasing its activity. The regulatory region of GlnE binds the signal transduction protein PII (GlnB) which indicates the nitrogen status of the cell. This chain is Bifunctional glutamine synthetase adenylyltransferase/adenylyl-removing enzyme, found in Chromobacterium violaceum (strain ATCC 12472 / DSM 30191 / JCM 1249 / CCUG 213 / NBRC 12614 / NCIMB 9131 / NCTC 9757 / MK).